Reading from the N-terminus, the 572-residue chain is 2-succinyl-5-enolpyruvyl-6-hydroxy-3-cyclohexene-1-carboxylate synthase (572 aa).

The protein belongs to the TPP enzyme family. MenD subfamily. Homodimer. It depends on Mg(2+) as a cofactor. Mn(2+) serves as cofactor. The cofactor is thiamine diphosphate.

It carries out the reaction isochorismate + 2-oxoglutarate + H(+) = 5-enolpyruvoyl-6-hydroxy-2-succinyl-cyclohex-3-ene-1-carboxylate + CO2. The protein operates within quinol/quinone metabolism; 1,4-dihydroxy-2-naphthoate biosynthesis; 1,4-dihydroxy-2-naphthoate from chorismate: step 2/7. Its pathway is quinol/quinone metabolism; menaquinone biosynthesis. Functionally, catalyzes the thiamine diphosphate-dependent decarboxylation of 2-oxoglutarate and the subsequent addition of the resulting succinic semialdehyde-thiamine pyrophosphate anion to isochorismate to yield 2-succinyl-5-enolpyruvyl-6-hydroxy-3-cyclohexene-1-carboxylate (SEPHCHC). This is 2-succinyl-5-enolpyruvyl-6-hydroxy-3-cyclohexene-1-carboxylate synthase from Aeromonas salmonicida (strain A449).